Here is a 1265-residue protein sequence, read N- to C-terminus: Methionine synthase (1265 aa).

In terms of domain architecture, Hcy-binding spans 19-338 (RDEINAILQK…DHIREIAEAV (320 aa)). 3 residues coordinate Zn(2+): Cys260, Cys323, and Cys324. In terms of domain architecture, Pterin-binding spans 371 to 632 (FVNIGERCNV…IHKELLQLCE (262 aa)). (6S)-5,6,7,8-tetrahydrofolate contacts are provided by residues 382-384 (GSR), Asp449, Asn470, Asp537, Asn579, Arg585, and Arg591. Positions 662–759 (QTDEWRNGPV…FMEKEREETR (98 aa)) constitute a B12-binding N-terminal domain. Methylcob(III)alamin is bound by residues Glu709, 782–786 (GDVHD), His785, Ser830, Thr834, and Ala886. Residues 772 to 907 (QGTIVLATVK…DENLKDEYFE (136 aa)) form the B12-binding domain. Residues 923–1265 (SLKERRYLPL…LGPILGYDTD (343 aa)) form the AdoMet activation domain. Residues Asp974, Arg1172, and 1227–1228 (YF) contribute to the S-adenosyl-L-methionine site. A Phosphothreonine modification is found at Thr1264.

Belongs to the vitamin-B12 dependent methionine synthase family. In terms of assembly, monomer. Dimer. Forms a multiprotein complex with MMACHC, MMADHC and MTRR. Methylcob(III)alamin serves as cofactor. Zn(2+) is required as a cofactor. In terms of tissue distribution, widely expressed. Expressed at the highest levels in pancreas, heart, brain, skeletal muscle and placenta. Expressed at lower levels in lung, liver and kidney.

It localises to the cytoplasm. It carries out the reaction (6S)-5-methyl-5,6,7,8-tetrahydrofolate + L-homocysteine = (6S)-5,6,7,8-tetrahydrofolate + L-methionine. It participates in amino-acid biosynthesis; L-methionine biosynthesis via de novo pathway; L-methionine from L-homocysteine (MetH route): step 1/1. Catalyzes the transfer of a methyl group from methylcob(III)alamin (MeCbl) to homocysteine, yielding enzyme-bound cob(I)alamin and methionine in the cytosol. MeCbl is an active form of cobalamin (vitamin B12) used as a cofactor for methionine biosynthesis. Cob(I)alamin form is regenerated to MeCbl by a transfer of a methyl group from 5-methyltetrahydrofolate. The processing of cobalamin in the cytosol occurs in a multiprotein complex composed of at least MMACHC, MMADHC, MTRR (methionine synthase reductase) and MTR which may contribute to shuttle safely and efficiently cobalamin towards MTR in order to produce methionine. This chain is Methionine synthase, found in Homo sapiens (Human).